Reading from the N-terminus, the 552-residue chain is Urocanate hydratase (552 aa).

NAD(+)-binding positions include 49–50 (GG), Q127, 173–175 (GMG), D193, 239–240 (NA), 260–264 (QTSAH), 270–271 (YI), and Y319. C407 is a catalytic residue. G489 contacts NAD(+).

This sequence belongs to the urocanase family. NAD(+) serves as cofactor.

The protein resides in the cytoplasm. The catalysed reaction is 4-imidazolone-5-propanoate = trans-urocanate + H2O. Its pathway is amino-acid degradation; L-histidine degradation into L-glutamate; N-formimidoyl-L-glutamate from L-histidine: step 2/3. In terms of biological role, catalyzes the conversion of urocanate to 4-imidazolone-5-propionate. In Bacillus cereus (strain 03BB102), this protein is Urocanate hydratase.